The sequence spans 227 residues: Cytidylate kinase (227 aa).

Position 12–20 (12–20 (GPSGAGKGT)) interacts with ATP.

Belongs to the cytidylate kinase family. Type 1 subfamily.

The protein resides in the cytoplasm. It catalyses the reaction CMP + ATP = CDP + ADP. It carries out the reaction dCMP + ATP = dCDP + ADP. The chain is Cytidylate kinase from Salmonella paratyphi B (strain ATCC BAA-1250 / SPB7).